The primary structure comprises 838 residues: Leucine--tRNA ligase (838 aa).

The short motif at 38–48 (PYPSGKAHVGH) is the 'HIGH' region element. Positions 608 to 612 (KMSKS) match the 'KMSKS' region motif. Residue lysine 611 coordinates ATP.

This sequence belongs to the class-I aminoacyl-tRNA synthetase family.

The protein localises to the cytoplasm. The catalysed reaction is tRNA(Leu) + L-leucine + ATP = L-leucyl-tRNA(Leu) + AMP + diphosphate. In Orientia tsutsugamushi (strain Boryong) (Rickettsia tsutsugamushi), this protein is Leucine--tRNA ligase.